We begin with the raw amino-acid sequence, 292 residues long: Cbb3-type cytochrome c oxidase subunit CcoP (292 aa).

Transmembrane regions (helical) follow at residues 11–31 (FGLI…SSLI) and 62–82 (VGWI…FFFG). Cytochrome c domains lie at 116 to 195 (ELVD…MAEI) and 205 to 288 (QLID…QSLK). The heme c site is built by C129, C132, H133, M174, C219, C222, H223, and M264.

It belongs to the CcoP / FixP family. In terms of assembly, component of the cbb3-type cytochrome c oxidase at least composed of CcoN, CcoO, CcoQ and CcoP. It depends on heme c as a cofactor.

The protein resides in the cell inner membrane. Its pathway is energy metabolism; oxidative phosphorylation. In terms of biological role, C-type cytochrome. Part of the cbb3-type cytochrome c oxidase complex. CcoP subunit is required for transferring electrons from donor cytochrome c via its heme groups to CcoO subunit. From there, electrons are shuttled to the catalytic binuclear center of CcoN subunit where oxygen reduction takes place. The complex also functions as a proton pump. In Helicobacter pylori (strain 52), this protein is Cbb3-type cytochrome c oxidase subunit CcoP.